We begin with the raw amino-acid sequence, 475 residues long: Erythroid membrane-associated protein (475 aa).

Residues 1 to 29 form the signal peptide; it reads MEMASSAGSWLSGCLIPLVFLRLSVHVSG. The 111-residue stretch at 30–140 folds into the Ig-like V-type domain; the sequence is HAGDAGKFHV…GNLSKEDTVI (111 aa). Residues 30–155 are Extracellular-facing; it reads HAGDAGKFHV…PSVGSLSPSA (126 aa). The cysteines at positions 50 and 126 are disulfide-linked. Asn132 carries N-linked (GlcNAc...) asparagine glycosylation. Residues 156–176 traverse the membrane as a helical segment; that stretch reads VALAVILPVLVLLIMVCLCLI. Topologically, residues 177 to 475 are cytoplasmic; the sequence is WKQRRAKEKL…ALQELKAPSF (299 aa). The B30.2/SPRY domain maps to 220-418; sequence KLKRAAANSG…LVICSELHKS (199 aa). A Phosphoserine modification is found at Ser418.

The protein belongs to the immunoglobulin superfamily. BTN/MOG family. Post-translationally, glycosylated. Expressed in erythroid-enriched bone marrow (at protein level). Highly expressed in bone marrow and to a lower extent in leukocytes, thymus, lymph node and spleen.

It is found in the cell membrane. Its subcellular location is the cytoplasm. In terms of biological role, possible role as a cell-adhesion or receptor molecule of erythroid cells. The chain is Erythroid membrane-associated protein (ERMAP) from Homo sapiens (Human).